Reading from the N-terminus, the 688-residue chain is Potassium-transporting ATPase ATP-binding subunit (688 aa).

4 helical membrane passes run proline 34 to leucine 54, alanine 62 to alanine 82, valine 219 to leucine 239, and valine 260 to isoleucine 280. The 4-aspartylphosphate intermediate role is filled by aspartate 313. ATP contacts are provided by residues aspartate 350, glutamate 354, phenylalanine 383–serine 390, and lysine 401. Mg(2+)-binding residues include aspartate 524 and aspartate 528. 3 helical membrane passes run phenylalanine 594–methionine 614, alanine 622–leucine 642, and isoleucine 662–leucine 682.

Belongs to the cation transport ATPase (P-type) (TC 3.A.3) family. Type IA subfamily. The system is composed of three essential subunits: KdpA, KdpB and KdpC.

The protein localises to the cell inner membrane. The catalysed reaction is K(+)(out) + ATP + H2O = K(+)(in) + ADP + phosphate + H(+). In terms of biological role, part of the high-affinity ATP-driven potassium transport (or Kdp) system, which catalyzes the hydrolysis of ATP coupled with the electrogenic transport of potassium into the cytoplasm. This subunit is responsible for energy coupling to the transport system and for the release of the potassium ions to the cytoplasm. The chain is Potassium-transporting ATPase ATP-binding subunit from Yersinia pseudotuberculosis serotype O:1b (strain IP 31758).